A 236-amino-acid polypeptide reads, in one-letter code: MKINILTLFPEMFDIFKHSIIGRARENGFLHIETVNIRDYTLNKHKKVDDYPYGGGAGMVMTPQPIVDAIKAVKEKNKGKVIFLGPRGKTFNQEMAKELSKEEELIFVCGHYEGIDQRIYKYFDLEISLGDFVLTGGEMACIPVIDSISRLVPGVLGSEESFQDESYYDGTLEYPQYTRPFEFEGEKVPEVLISGHHENIRKWRRKESLLITKERRPDMFEKIKLSKEDIKLLKSK.

S-adenosyl-L-methionine contacts are provided by residues Gly110 and 129-134 (LGDFVL).

It belongs to the RNA methyltransferase TrmD family. In terms of assembly, homodimer.

It localises to the cytoplasm. It catalyses the reaction guanosine(37) in tRNA + S-adenosyl-L-methionine = N(1)-methylguanosine(37) in tRNA + S-adenosyl-L-homocysteine + H(+). Its function is as follows. Specifically methylates guanosine-37 in various tRNAs. This Clostridium perfringens (strain SM101 / Type A) protein is tRNA (guanine-N(1)-)-methyltransferase.